The sequence spans 548 residues: WEB family protein At1g12150 (548 aa).

The stretch at 71–544 (KEFMKIKQKL…ELQRWRQQEN (474 aa)) forms a coiled coil. Positions 430–448 (VREEMKMISQKQESKKQDE) are enriched in basic and acidic residues. A disordered region spans residues 430-455 (VREEMKMISQKQESKKQDEESSGSKI).

Belongs to the WEB family.

This Arabidopsis thaliana (Mouse-ear cress) protein is WEB family protein At1g12150.